The primary structure comprises 560 residues: Probable 2,3-bisphosphoglycerate-independent phosphoglycerate mutase 2 (560 aa).

The residue at position 2 (Gly-2) is an N-acetylglycine. Mn(2+)-binding residues include Asp-29 and Ser-82. The active-site Phosphoserine intermediate is Ser-82. Substrate is bound by residues His-141, 171–172 (RD), Arg-207, Arg-214, 287–290 (RADR), and Lys-362. Mn(2+)-binding residues include Asp-431, His-435, Asp-472, His-473, and His-502.

The protein belongs to the BPG-independent phosphoglycerate mutase family. Monomer. The cofactor is Mn(2+).

The protein resides in the cytoplasm. The catalysed reaction is (2R)-2-phosphoglycerate = (2R)-3-phosphoglycerate. It participates in carbohydrate degradation; glycolysis; pyruvate from D-glyceraldehyde 3-phosphate: step 3/5. In terms of biological role, catalyzes the interconversion of 2-phosphoglycerate (2-PGA) and 3-phosphoglycerate (3-PGA). Required for guard cell function (e.g. blue light-, abscisic acid- (ABA), and low CO(2)-regulated stomatal movements) and fertility (e.g. pollen grains production). This Arabidopsis thaliana (Mouse-ear cress) protein is Probable 2,3-bisphosphoglycerate-independent phosphoglycerate mutase 2 (PGM2).